Here is a 243-residue protein sequence, read N- to C-terminus: MKDTLFNESLNKRFCFDEKVAHVFDDMLERSIPYYHEMLNLGAYFIAQNLKENVYHKSLPKPLIYDLGCSTGNFFIALNQQIQQDIELVGIDNSMPMLKKAQEKLKDFNNVRFECMDFLEVKFKEASAFSLLFVLQFVRPMQREVLLKKIYNSLALNGVLLVGEKIMSEDRILDKQMIELYYLYKQNQGYSHNEIAFKREALENVLVPYSLKENIALLESVGFKHVEALFKWVNFTLLVARKT.

S-adenosyl-L-methionine contacts are provided by residues Y35, 68–70 (GCS), 92–93 (DN), and R199.

It belongs to the class I-like SAM-binding methyltransferase superfamily. Cx-SAM synthase family. In terms of assembly, homodimer.

It carries out the reaction prephenate + S-adenosyl-L-methionine = carboxy-S-adenosyl-L-methionine + 3-phenylpyruvate + H2O. Catalyzes the conversion of S-adenosyl-L-methionine (SAM) to carboxy-S-adenosyl-L-methionine (Cx-SAM). This chain is Carboxy-S-adenosyl-L-methionine synthase, found in Helicobacter pylori (strain J99 / ATCC 700824) (Campylobacter pylori J99).